A 626-amino-acid chain; its full sequence is Phosphomethylpyrimidine synthase (626 aa).

Residues Asn237, Met266, Tyr295, His331, 351–353 (SRG), 392–395 (DGLR), and Glu431 each bind substrate. A Zn(2+)-binding site is contributed by His435. Residue Tyr458 participates in substrate binding. Residue His499 participates in Zn(2+) binding. [4Fe-4S] cluster is bound by residues Cys579, Cys582, and Cys587.

This sequence belongs to the ThiC family. In terms of assembly, homodimer. Requires [4Fe-4S] cluster as cofactor.

It carries out the reaction 5-amino-1-(5-phospho-beta-D-ribosyl)imidazole + S-adenosyl-L-methionine = 4-amino-2-methyl-5-(phosphooxymethyl)pyrimidine + CO + 5'-deoxyadenosine + formate + L-methionine + 3 H(+). Its pathway is cofactor biosynthesis; thiamine diphosphate biosynthesis. Catalyzes the synthesis of the hydroxymethylpyrimidine phosphate (HMP-P) moiety of thiamine from aminoimidazole ribotide (AIR) in a radical S-adenosyl-L-methionine (SAM)-dependent reaction. In Cupriavidus necator (strain ATCC 17699 / DSM 428 / KCTC 22496 / NCIMB 10442 / H16 / Stanier 337) (Ralstonia eutropha), this protein is Phosphomethylpyrimidine synthase.